Consider the following 165-residue polypeptide: Ubiquitin-fold modifier-conjugating enzyme 1 (165 aa).

Residue C116 is the Glycyl thioester intermediate of the active site.

It belongs to the ubiquitin-conjugating enzyme family. UFC1 subfamily.

Functionally, E2-like enzyme which forms an intermediate with UFM1 via a thioester linkage. The sequence is that of Ubiquitin-fold modifier-conjugating enzyme 1 from Drosophila virilis (Fruit fly).